The primary structure comprises 961 residues: Leucine--tRNA ligase (961 aa).

Positions Pro-41–His-51 match the 'HIGH' region motif. The 'KMSKS' region motif lies at Lys-632–Ser-636. Lys-635 lines the ATP pocket.

It belongs to the class-I aminoacyl-tRNA synthetase family.

It localises to the cytoplasm. It catalyses the reaction tRNA(Leu) + L-leucine + ATP = L-leucyl-tRNA(Leu) + AMP + diphosphate. The chain is Leucine--tRNA ligase from Methanosarcina acetivorans (strain ATCC 35395 / DSM 2834 / JCM 12185 / C2A).